The primary structure comprises 301 residues: Probable alpha-L-glutamate ligase (301 aa).

An ATP-grasp domain is found at Leu-104–Glu-287. ATP-binding positions include Lys-141, Glu-178–Tyr-179, Asp-187, and Arg-211–Asn-213. Positions 248, 260, and 262 each coordinate Mg(2+). Residues Asp-248, Glu-260, and Asn-262 each coordinate Mn(2+).

The protein belongs to the RimK family. Requires Mg(2+) as cofactor. Mn(2+) serves as cofactor.

The chain is Probable alpha-L-glutamate ligase from Pseudomonas syringae pv. syringae (strain B728a).